A 145-amino-acid polypeptide reads, in one-letter code: Putative antiporter subunit mnhG2 (145 aa).

The next 3 helical transmembrane spans lie at 11-31 (IAAV…IGIV), 51-71 (VLLT…FFSV), and 72-92 (RLLL…HLVA).

The protein belongs to the CPA3 antiporters (TC 2.A.63) subunit G family. In terms of assembly, may form a heterooligomeric complex that consists of seven subunits: mnhA2, mnhB2, mnhC2, mnhD2, mnhE2, mnhF2 and mnhG2.

Its subcellular location is the cell membrane. In Staphylococcus aureus (strain COL), this protein is Putative antiporter subunit mnhG2 (mnhG2).